A 420-amino-acid chain; its full sequence is ATP phosphoribosyltransferase regulatory subunit (420 aa).

The protein belongs to the class-II aminoacyl-tRNA synthetase family. HisZ subfamily. In terms of assembly, heteromultimer composed of HisG and HisZ subunits.

The protein localises to the cytoplasm. It participates in amino-acid biosynthesis; L-histidine biosynthesis; L-histidine from 5-phospho-alpha-D-ribose 1-diphosphate: step 1/9. Required for the first step of histidine biosynthesis. May allow the feedback regulation of ATP phosphoribosyltransferase activity by histidine. The sequence is that of ATP phosphoribosyltransferase regulatory subunit from Bacillus cereus (strain B4264).